The primary structure comprises 679 residues: Protein hook (679 aa).

The region spanning 5–123 (NGMYYSLLEW…RLLQLVLGCA (119 aa)) is the Calponin-homology (CH) domain. The stretch at 140 to 627 (EEELQANIMR…SKTKMSTMEE (488 aa)) forms a coiled coil.

The protein belongs to the hook family. Homodimer. Interacts with microtubules via its N-terminus.

The protein resides in the cytoplasm. It is found in the cytoskeleton. The protein localises to the endosome. It localises to the synapse. Functionally, involved in endocytic trafficking by stabilizing organelles of the endocytic pathway. Probably acts as a cytoskeletal linker protein required to tether endosome vesicles to the cytoskeleton. Involved in modulation of endocytosis at stages required for down-regulation of membrane proteins that control synapse size. Not involved in synaptic vesicle recycling. Required in R7 cells for boss endocytosis into multivesicular bodies (MVBs). Has a role in regulating adult longevity. This chain is Protein hook, found in Drosophila mojavensis (Fruit fly).